Here is a 185-residue protein sequence, read N- to C-terminus: Elongation factor P (185 aa).

This sequence belongs to the elongation factor P family.

It is found in the cytoplasm. It functions in the pathway protein biosynthesis; polypeptide chain elongation. Its function is as follows. Involved in peptide bond synthesis. Stimulates efficient translation and peptide-bond synthesis on native or reconstituted 70S ribosomes in vitro. Probably functions indirectly by altering the affinity of the ribosome for aminoacyl-tRNA, thus increasing their reactivity as acceptors for peptidyl transferase. In Acaryochloris marina (strain MBIC 11017), this protein is Elongation factor P.